The primary structure comprises 59 residues: Protein SspF (59 aa).

This sequence belongs to the alpha/beta-type SASP family.

In terms of biological role, may play some important role in either sporulation or the dormant spore. This is Protein SspF (sspF) from Bacillus cereus (strain ATCC 14579 / DSM 31 / CCUG 7414 / JCM 2152 / NBRC 15305 / NCIMB 9373 / NCTC 2599 / NRRL B-3711).